The following is a 215-amino-acid chain: UPF0323 lipoprotein jhp_0217 (215 aa).

The signal sequence occupies residues 1–27; sequence MKKPYRKISDYAIVGGLSALVMVSIVG. C28 carries the N-palmitoyl cysteine lipid modification. Residue C28 is the site of S-diacylglycerol cysteine attachment. Residues 158–169 are compositionally biased toward polar residues; it reads QRTYKSPQAYQR. Positions 158 to 215 are disordered; that stretch reads QRTYKSPQAYQRSQNSFSKSAPSASSMGTASKGQSGFFGSSRPTSSPAISSGTRGFNA. Residues 170-183 are compositionally biased toward low complexity; it reads SQNSFSKSAPSASS. The span at 184 to 195 shows a compositional bias: polar residues; the sequence is MGTASKGQSGFF. Over residues 197-208 the composition is skewed to low complexity; it reads SSRPTSSPAISS.

Belongs to the UPF0323 family.

The protein localises to the cell membrane. This Helicobacter pylori (strain J99 / ATCC 700824) (Campylobacter pylori J99) protein is UPF0323 lipoprotein jhp_0217.